Consider the following 344-residue polypeptide: uncharacterized protein (344 aa).

A compositionally biased stretch (basic and acidic residues) spans 323–332 (KQQEQREQGR). Residues 323–344 (KQQEQREQGRRAAYLQQRGMER) form a disordered region.

This is an uncharacterized protein from Bacillus anthracis.